We begin with the raw amino-acid sequence, 229 residues long: Large ribosomal subunit protein uL1 (229 aa).

Belongs to the universal ribosomal protein uL1 family. In terms of assembly, part of the 50S ribosomal subunit.

Functionally, binds directly to 23S rRNA. The L1 stalk is quite mobile in the ribosome, and is involved in E site tRNA release. Protein L1 is also a translational repressor protein, it controls the translation of the L11 operon by binding to its mRNA. In Streptococcus suis (strain 98HAH33), this protein is Large ribosomal subunit protein uL1.